The primary structure comprises 196 residues: Adenine phosphoribosyltransferase (196 aa).

It belongs to the purine/pyrimidine phosphoribosyltransferase family. In terms of assembly, homodimer.

It localises to the cytoplasm. The catalysed reaction is AMP + diphosphate = 5-phospho-alpha-D-ribose 1-diphosphate + adenine. It functions in the pathway purine metabolism; AMP biosynthesis via salvage pathway; AMP from adenine: step 1/1. Its function is as follows. Catalyzes a salvage reaction resulting in the formation of AMP, that is energically less costly than de novo synthesis. In Methylibium petroleiphilum (strain ATCC BAA-1232 / LMG 22953 / PM1), this protein is Adenine phosphoribosyltransferase.